The sequence spans 571 residues: MYYMLIGFIIVVIAVISAGYILKRKHYQRINELEETKIKLRERPVIDELSKVKKLKLTGQTEALFESWRSSWDEIETRLFPDLEEVLLEAEMNADRYRFRSATNTENDIEQMLVVIEKQMDQILGGLKELLISEEKNAKESRMTKEKFAELRREVLTRGFKLGETLPYVEAKLNSLAENLNRYDSLTDQADHLEAREIVISVQKEMAVIEAQMERIPSLLHETDTILPEEMNKLRAGYEEMVRKGYYLAQMELDKEISRMKTQIEKMKQNVINLDLDEAEEGIEELHNEIELFYDTLEHEAEARHFVKENHSPTSDKLKRQNTVSDALAEQITEVKQTYHVAEDDLAVYLKTSAKLSEAKENFEQLTALIASGEIAYSAAQDTLKEIDAALLSISSEQDNFAEELRSLRKDELEARDDAERMRRAIITLDRKMERERLPGLPEEYLSLRAHMGESIDALEKRLEEKPLNMKAVSQDWRIAEEDLTHLTEKAEEMMENVRLVEHVIQYANRYRLRNKELADELVQAENHFYNDYQYKKALEIAVTALEKVETGAFKKVEKAYESKVSVDDIE.

Residues M1–Y3 are Extracellular-facing. The chain crosses the membrane as a helical span at residues M4 to L22. Residues K23 to E571 are Cytoplasmic-facing. 5 coiled-coil regions span residues E170–R215, L248–H299, D326–E374, N400–R437, and R478–F529.

The protein belongs to the EzrA family.

Its subcellular location is the cell membrane. In terms of biological role, negative regulator of FtsZ ring formation; modulates the frequency and position of FtsZ ring formation. Inhibits FtsZ ring formation at polar sites. Interacts either with FtsZ or with one of its binding partners to promote depolymerization. This is Septation ring formation regulator EzrA from Listeria innocua serovar 6a (strain ATCC BAA-680 / CLIP 11262).